Here is a 388-residue protein sequence, read N- to C-terminus: Branched-chain-amino-acid aminotransferase 2, chloroplastic (388 aa).

The N-terminal 22 residues, 1 to 22, are a transit peptide targeting the chloroplast; it reads MIKTITSLRKTLVLPLHLHIRT. The residue at position 235 (lysine 235) is an N6-(pyridoxal phosphate)lysine.

The protein belongs to the class-IV pyridoxal-phosphate-dependent aminotransferase family. It depends on pyridoxal 5'-phosphate as a cofactor.

It localises to the plastid. The protein resides in the chloroplast. It catalyses the reaction L-leucine + 2-oxoglutarate = 4-methyl-2-oxopentanoate + L-glutamate. The enzyme catalyses L-isoleucine + 2-oxoglutarate = (S)-3-methyl-2-oxopentanoate + L-glutamate. The catalysed reaction is L-valine + 2-oxoglutarate = 3-methyl-2-oxobutanoate + L-glutamate. It participates in amino-acid biosynthesis; L-isoleucine biosynthesis; L-isoleucine from 2-oxobutanoate: step 4/4. Its pathway is amino-acid biosynthesis; L-leucine biosynthesis; L-leucine from 3-methyl-2-oxobutanoate: step 4/4. It functions in the pathway amino-acid biosynthesis; L-valine biosynthesis; L-valine from pyruvate: step 4/4. Functionally, converts 2-oxo acids to branched-chain amino acids. Shows activity with L-Leu, L-Ile and L-Val as amino donors and 2-oxoglutarate as an amino acceptor, but no activity for D-isomers of Leu, Ile, Val, Asp, Glu or Ala. In Arabidopsis thaliana (Mouse-ear cress), this protein is Branched-chain-amino-acid aminotransferase 2, chloroplastic (BCAT2).